Reading from the N-terminus, the 441-residue chain is Dihydroorotase (441 aa).

Residues His-77 and His-79 each coordinate Zn(2+). Substrate contacts are provided by residues 79–81 (HFR) and Asn-111. Asp-167, His-194, and His-248 together coordinate Zn(2+). Substrate is bound at residue Asn-294. Asp-321 lines the Zn(2+) pocket. Asp-321 is a catalytic residue. Substrate contacts are provided by residues His-325 and 339–340 (FG).

It belongs to the metallo-dependent hydrolases superfamily. DHOase family. Class I DHOase subfamily. Zn(2+) serves as cofactor.

It catalyses the reaction (S)-dihydroorotate + H2O = N-carbamoyl-L-aspartate + H(+). The protein operates within pyrimidine metabolism; UMP biosynthesis via de novo pathway; (S)-dihydroorotate from bicarbonate: step 3/3. Its function is as follows. Catalyzes the reversible cyclization of carbamoyl aspartate to dihydroorotate. The polypeptide is Dihydroorotase (Wolbachia sp. subsp. Drosophila simulans (strain wRi)).